A 269-amino-acid polypeptide reads, in one-letter code: Hydroxyethylthiazole kinase (269 aa).

Met45 contacts substrate. 2 residues coordinate ATP: Arg121 and Thr167. Gly194 provides a ligand contact to substrate.

Belongs to the Thz kinase family. The cofactor is Mg(2+).

The enzyme catalyses 5-(2-hydroxyethyl)-4-methylthiazole + ATP = 4-methyl-5-(2-phosphooxyethyl)-thiazole + ADP + H(+). It participates in cofactor biosynthesis; thiamine diphosphate biosynthesis; 4-methyl-5-(2-phosphoethyl)-thiazole from 5-(2-hydroxyethyl)-4-methylthiazole: step 1/1. Its function is as follows. Catalyzes the phosphorylation of the hydroxyl group of 4-methyl-5-beta-hydroxyethylthiazole (THZ). In Brevibacillus brevis (strain 47 / JCM 6285 / NBRC 100599), this protein is Hydroxyethylthiazole kinase.